The sequence spans 234 residues: Large ribosomal subunit protein uL1 (234 aa).

This sequence belongs to the universal ribosomal protein uL1 family. In terms of assembly, part of the 50S ribosomal subunit.

Functionally, binds directly to 23S rRNA. The L1 stalk is quite mobile in the ribosome, and is involved in E site tRNA release. In terms of biological role, protein L1 is also a translational repressor protein, it controls the translation of the L11 operon by binding to its mRNA. This chain is Large ribosomal subunit protein uL1, found in Maridesulfovibrio salexigens (strain ATCC 14822 / DSM 2638 / NCIMB 8403 / VKM B-1763) (Desulfovibrio salexigens).